The following is a 613-amino-acid chain: Kelch-like protein 21 (613 aa).

The region spanning 38 to 105 is the BTB domain; sequence FDVTLCAEGK…CYTGRVTVTH (68 aa). Residues 140-242 form the BACK domain; that stretch reads CLEIQDFAEA…RRFYLLAHVE (103 aa). Kelch repeat units lie at residues 289 to 337, 338 to 384, 386 to 424, 426 to 472, 474 to 514, and 515 to 562; these read ILVV…ALGN, DIYV…VLKG, LYVV…ACRG, LYAI…TLNG, IYFV…ALGG, and RLYV…SIFR.

Component of the BCR(KLHL21) E3 ubiquitin ligase complex, at least composed of cul3, klhl21 and rbx1.

The protein resides in the cytoplasm. It is found in the cytoskeleton. Its subcellular location is the spindle. It participates in protein modification; protein ubiquitination. In terms of biological role, substrate-specific adapter of BCR (BTB-CUL3-RBX1) E3 ubiquitin-protein ligase complex required for efficient chromosome alignment and cytokinesis. The BCR(KLHL21) E3 ubiquitin ligase complex regulates localization of the chromosomal passenger complex (CPC) from chromosomes to the spindle midzone in anaphase and mediates the ubiquitination of AURKB. In Danio rerio (Zebrafish), this protein is Kelch-like protein 21 (klhl21).